The chain runs to 750 residues: Protein O-mannosyl-transferase 2 (750 aa).

Positions 1–23 (MPPATGGGLAESELRPRRGRCGP) are disordered. A Phosphoserine modification is found at serine 41. The chain crosses the membrane as a helical span at residues 54–74 (AVGWWALLALVTLLSFATRFH). Asparagine 98 is a glycosylation site (N-linked (GlcNAc...) asparagine). A run of 5 helical transmembrane segments spans residues 100 to 120 (TFFF…AGYL), 146 to 166 (GFCA…VLDL), 191 to 211 (QYIL…LSMV), 231 to 251 (LTGV…FIIL), and 283 to 303 (VLCL…VHFM). An N-linked (GlcNAc...) asparagine glycan is attached at asparagine 330. MIR domains are found at residues 334-390 (PEHL…IKKH), 403-459 (VEFV…IEVV), and 464-521 (GNRI…VEDH). Asparagine 445 carries N-linked (GlcNAc...) asparagine glycosylation. 2 N-linked (GlcNAc...) asparagine glycosylation sites follow: asparagine 528 and asparagine 583. The next 4 helical transmembrane spans lie at 596–616 (VVWW…SIIA), 643–663 (VLLG…VLYF), 665–685 (HYFP…DTLL), and 700–720 (GIHV…FYLF).

The protein belongs to the glycosyltransferase 39 family. In terms of assembly, interacts with POMT1. N-glycosylated. In terms of tissue distribution, highly expressed in testis; detected at low levels in most tissues.

The protein resides in the endoplasmic reticulum membrane. It catalyses the reaction a di-trans,poly-cis-dolichyl beta-D-mannosyl phosphate + L-seryl-[protein] = 3-O-(alpha-D-mannosyl)-L-seryl-[protein] + a di-trans,poly-cis-dolichyl phosphate + H(+). The catalysed reaction is a di-trans,poly-cis-dolichyl beta-D-mannosyl phosphate + L-threonyl-[protein] = 3-O-(alpha-D-mannosyl)-L-threonyl-[protein] + a di-trans,poly-cis-dolichyl phosphate + H(+). It functions in the pathway protein modification; protein glycosylation. Its activity is regulated as follows. Slightly activated by Mg(2+) and inhibited by both Ca(+) and Mn(2+). EDTA ha no effect on activity in vitro. Transfers mannosyl residues to the hydroxyl group of serine or threonine residues. Coexpression of both POMT1 and POMT2 is necessary for enzyme activity, expression of either POMT1 or POMT2 alone is insufficient. Essentially dedicated to O-mannosylation of alpha-DAG1 and few other proteins but not of cadherins and protocaherins. The chain is Protein O-mannosyl-transferase 2 (POMT2) from Homo sapiens (Human).